The sequence spans 238 residues: Ribonuclease PH (238 aa).

Residues Arg86 and 124 to 126 (GTR) each bind phosphate.

The protein belongs to the RNase PH family. Homohexameric ring arranged as a trimer of dimers.

It carries out the reaction tRNA(n+1) + phosphate = tRNA(n) + a ribonucleoside 5'-diphosphate. Its function is as follows. Phosphorolytic 3'-5' exoribonuclease that plays an important role in tRNA 3'-end maturation. Removes nucleotide residues following the 3'-CCA terminus of tRNAs; can also add nucleotides to the ends of RNA molecules by using nucleoside diphosphates as substrates, but this may not be physiologically important. Probably plays a role in initiation of 16S rRNA degradation (leading to ribosome degradation) during starvation. In Geotalea uraniireducens (strain Rf4) (Geobacter uraniireducens), this protein is Ribonuclease PH.